A 413-amino-acid polypeptide reads, in one-letter code: Gamma-glutamyl phosphate reductase (413 aa).

It belongs to the gamma-glutamyl phosphate reductase family.

It localises to the cytoplasm. The enzyme catalyses L-glutamate 5-semialdehyde + phosphate + NADP(+) = L-glutamyl 5-phosphate + NADPH + H(+). It functions in the pathway amino-acid biosynthesis; L-proline biosynthesis; L-glutamate 5-semialdehyde from L-glutamate: step 2/2. Functionally, catalyzes the NADPH-dependent reduction of L-glutamate 5-phosphate into L-glutamate 5-semialdehyde and phosphate. The product spontaneously undergoes cyclization to form 1-pyrroline-5-carboxylate. This Salinispora arenicola (strain CNS-205) protein is Gamma-glutamyl phosphate reductase.